Consider the following 285-residue polypeptide: Vacuolar protein sorting-associated protein 37B (285 aa).

Residues 50-170 (ASNRSLAEGN…ELVLKGQRHP (121 aa)) are interaction with IST1. Residues 84-173 (FEAYQIKKTK…LKGQRHPQAG (90 aa)) form the VPS37 C-terminal domain. Disordered stretches follow at residues 167-215 (QRHP…PPVP) and 242-285 (PLPP…FILQ). 2 stretches are compositionally biased toward pro residues: residues 173–184 (GAPPPPRVPEPS) and 206–215 (RIPPPPPPVP). Positions 250 to 259 (PSQQGFSAQL) are enriched in polar residues. Residues 262-275 (PYPPALPQRPPPRM) are compositionally biased toward pro residues. The segment covering 276 to 285 (APHQPGFILQ) has biased composition (low complexity).

It belongs to the VPS37 family. In terms of assembly, component of the ESCRT-I complex (endosomal sorting complex required for transport I) which consists of TSG101, VPS28, a VPS37 protein (VPS37A to -D) and MVB12A or MVB12B in a 1:1:1:1 stoichiometry. Interacts with TSG101, VPS28, MVB12A and MVB12B. Component of the ESCRT-I complex (endosomal sorting complex required for transport I) which consists of TSG101, VPS28, a VPS37 protein (VPS37A to -D) and UBAP1 in a 1:1:1:1 stoichiometry. Interacts with CEP55. Interacts with IST1.

The protein localises to the late endosome membrane. Its function is as follows. Component of the ESCRT-I complex, a regulator of vesicular trafficking process. Required for the sorting of endocytic ubiquitinated cargos into multivesicular bodies. May be involved in cell growth and differentiation. In Mus musculus (Mouse), this protein is Vacuolar protein sorting-associated protein 37B (Vps37b).